The primary structure comprises 77 residues: ATP synthase subunit c (77 aa).

Helical transmembrane passes span I13–A33 and F55–F75.

This sequence belongs to the ATPase C chain family. In terms of assembly, F-type ATPases have 2 components, F(1) - the catalytic core - and F(0) - the membrane proton channel. F(1) has five subunits: alpha(3), beta(3), gamma(1), delta(1), epsilon(1). F(0) has three main subunits: a(1), b(2) and c(10-14). The alpha and beta chains form an alternating ring which encloses part of the gamma chain. F(1) is attached to F(0) by a central stalk formed by the gamma and epsilon chains, while a peripheral stalk is formed by the delta and b chains.

It localises to the cell membrane. Its function is as follows. F(1)F(0) ATP synthase produces ATP from ADP in the presence of a proton or sodium gradient. F-type ATPases consist of two structural domains, F(1) containing the extramembraneous catalytic core and F(0) containing the membrane proton channel, linked together by a central stalk and a peripheral stalk. During catalysis, ATP synthesis in the catalytic domain of F(1) is coupled via a rotary mechanism of the central stalk subunits to proton translocation. Functionally, key component of the F(0) channel; it plays a direct role in translocation across the membrane. A homomeric c-ring of between 10-14 subunits forms the central stalk rotor element with the F(1) delta and epsilon subunits. The sequence is that of ATP synthase subunit c from Clavibacter michiganensis subsp. michiganensis (strain NCPPB 382).